A 569-amino-acid polypeptide reads, in one-letter code: Urease subunit beta (569 aa).

A Urease domain is found at 131–569; the sequence is GGIDTHIHFI…LSLAQLYNLF (439 aa). 3 residues coordinate Ni(2+): His136, His138, and Lys219. Lys219 carries the N6-carboxylysine modification. Position 221 (His221) interacts with substrate. Ni(2+) is bound by residues His248 and His274. Residue His322 is the Proton donor of the active site. Residue Asp362 participates in Ni(2+) binding.

It belongs to the metallo-dependent hydrolases superfamily. Urease alpha subunit family. In terms of assembly, heterohexamer of 3 UreA (alpha) and 3 UreB (beta) subunits. Ni cation serves as cofactor. In terms of processing, carboxylation allows a single lysine to coordinate two nickel ions.

It localises to the cytoplasm. The catalysed reaction is urea + 2 H2O + H(+) = hydrogencarbonate + 2 NH4(+). It participates in nitrogen metabolism; urea degradation; CO(2) and NH(3) from urea (urease route): step 1/1. This is Urease subunit beta from Helicobacter felis (strain ATCC 49179 / CCUG 28539 / NCTC 12436 / CS1).